A 596-amino-acid polypeptide reads, in one-letter code: Probable protein phosphatase 2C 26 (596 aa).

Positions 122–154 are disordered; it reads SGPLDPAVPFSGPLPAKPPKPASSSSRGFSRRF. One can recognise a PPM-type phosphatase domain in the interval 177 to 584; that stretch reads LRRDDGVQWA…DDVTVMVISL (408 aa). Residues D212, G213, D512, and D575 each coordinate Mn(2+).

It belongs to the PP2C family. It depends on Mg(2+) as a cofactor. Requires Mn(2+) as cofactor.

The catalysed reaction is O-phospho-L-seryl-[protein] + H2O = L-seryl-[protein] + phosphate. It carries out the reaction O-phospho-L-threonyl-[protein] + H2O = L-threonyl-[protein] + phosphate. In Oryza sativa subsp. japonica (Rice), this protein is Probable protein phosphatase 2C 26.